The chain runs to 343 residues: Dihydroorotase (343 aa).

Zn(2+) contacts are provided by His13 and His15. Substrate is bound by residues 15–17 and Asn41; that span reads HFR. 3 residues coordinate Zn(2+): Lys98, His135, and His173. N6-carboxylysine is present on Lys98. His135 is a substrate binding site. Position 218 (Leu218) interacts with substrate. Asp246 lines the Zn(2+) pocket. Asp246 is a catalytic residue. His250 and Ala262 together coordinate substrate.

It belongs to the metallo-dependent hydrolases superfamily. DHOase family. Class II DHOase subfamily. As to quaternary structure, homodimer. The cofactor is Zn(2+).

It carries out the reaction (S)-dihydroorotate + H2O = N-carbamoyl-L-aspartate + H(+). Its pathway is pyrimidine metabolism; UMP biosynthesis via de novo pathway; (S)-dihydroorotate from bicarbonate: step 3/3. Its function is as follows. Catalyzes the reversible cyclization of carbamoyl aspartate to dihydroorotate. The polypeptide is Dihydroorotase (Marinomonas sp. (strain MWYL1)).